A 370-amino-acid chain; its full sequence is Queuine tRNA-ribosyltransferase (370 aa).

The active-site Proton acceptor is Asp-89. Substrate is bound by residues 89–93 (DSGGF), Asp-143, and Gly-214. Residues 245 to 251 (GVGKPED) are RNA binding. Asp-264 acts as the Nucleophile in catalysis. The RNA binding; important for wobble base 34 recognition stretch occupies residues 269-273 (TRNAR). Zn(2+) contacts are provided by Cys-302, Cys-304, Cys-307, and His-333.

Belongs to the queuine tRNA-ribosyltransferase family. In terms of assembly, homodimer. Within each dimer, one monomer is responsible for RNA recognition and catalysis, while the other monomer binds to the replacement base PreQ1. Requires Zn(2+) as cofactor.

The enzyme catalyses 7-aminomethyl-7-carbaguanine + guanosine(34) in tRNA = 7-aminomethyl-7-carbaguanosine(34) in tRNA + guanine. Its pathway is tRNA modification; tRNA-queuosine biosynthesis. In terms of biological role, catalyzes the base-exchange of a guanine (G) residue with the queuine precursor 7-aminomethyl-7-deazaguanine (PreQ1) at position 34 (anticodon wobble position) in tRNAs with GU(N) anticodons (tRNA-Asp, -Asn, -His and -Tyr). Catalysis occurs through a double-displacement mechanism. The nucleophile active site attacks the C1' of nucleotide 34 to detach the guanine base from the RNA, forming a covalent enzyme-RNA intermediate. The proton acceptor active site deprotonates the incoming PreQ1, allowing a nucleophilic attack on the C1' of the ribose to form the product. After dissociation, two additional enzymatic reactions on the tRNA convert PreQ1 to queuine (Q), resulting in the hypermodified nucleoside queuosine (7-(((4,5-cis-dihydroxy-2-cyclopenten-1-yl)amino)methyl)-7-deazaguanosine). The sequence is that of Queuine tRNA-ribosyltransferase from Buchnera aphidicola subsp. Acyrthosiphon pisum (strain 5A).